Consider the following 354-residue polypeptide: Uroporphyrinogen decarboxylase (354 aa).

Substrate is bound by residues 27–31 (RQAGR), aspartate 77, tyrosine 154, threonine 209, and histidine 327.

It belongs to the uroporphyrinogen decarboxylase family. Homodimer.

It localises to the cytoplasm. The enzyme catalyses uroporphyrinogen III + 4 H(+) = coproporphyrinogen III + 4 CO2. It participates in porphyrin-containing compound metabolism; protoporphyrin-IX biosynthesis; coproporphyrinogen-III from 5-aminolevulinate: step 4/4. Its function is as follows. Catalyzes the decarboxylation of four acetate groups of uroporphyrinogen-III to yield coproporphyrinogen-III. This chain is Uroporphyrinogen decarboxylase, found in Salmonella newport (strain SL254).